A 1259-amino-acid polypeptide reads, in one-letter code: uncharacterized protein (1259 aa).

The disordered stretch occupies residues 354–410; sequence KLNQAGGKRNSSMNNSTQNNNSSRSNNSARNNNSVWNNNNSAWKNNNSAWNDNSSWK. The span at 362–410 shows a compositional bias: low complexity; the sequence is RNSSMNNSTQNNNSSRSNNSARNNNSVWNNNNSAWKNNNSAWNDNSSWK.

The protein resides in the virion. This is an uncharacterized protein from Acanthamoeba polyphaga (Amoeba).